A 170-amino-acid polypeptide reads, in one-letter code: Zinc finger protein 576 (170 aa).

Residues 1 to 29 are disordered; the sequence is MEDPNPEENMKQQDSPKERSPQSPGGNIC. The span at 8-20 shows a compositional bias: basic and acidic residues; the sequence is ENMKQQDSPKERS. 4 C2H2-type zinc fingers span residues 34-57, 71-93, 112-134, and 143-165; these read PKCT…KREH, FICF…QRSH, FPCP…RQMH, and FACT…YIRH.

The protein belongs to the krueppel C2H2-type zinc-finger protein family.

Its subcellular location is the nucleus. Functionally, may be involved in transcriptional regulation. The polypeptide is Zinc finger protein 576 (ZNF576) (Homo sapiens (Human)).